Here is a 277-residue protein sequence, read N- to C-terminus: 2,3,4,5-tetrahydropyridine-2,6-dicarboxylate N-succinyltransferase (277 aa).

Substrate-binding residues include R106 and D143.

Belongs to the transferase hexapeptide repeat family. Homotrimer.

Its subcellular location is the cytoplasm. It carries out the reaction (S)-2,3,4,5-tetrahydrodipicolinate + succinyl-CoA + H2O = (S)-2-succinylamino-6-oxoheptanedioate + CoA. Its pathway is amino-acid biosynthesis; L-lysine biosynthesis via DAP pathway; LL-2,6-diaminopimelate from (S)-tetrahydrodipicolinate (succinylase route): step 1/3. The sequence is that of 2,3,4,5-tetrahydropyridine-2,6-dicarboxylate N-succinyltransferase from Xylella fastidiosa (strain Temecula1 / ATCC 700964).